The chain runs to 142 residues: Hemoglobin subunit alpha-1 (142 aa).

In terms of domain architecture, Globin spans 2–142; that stretch reads KLSADDKHNV…VGYVLASKYR (141 aa). H59 serves as a coordination point for O2. H88 serves as a coordination point for heme b.

This sequence belongs to the globin family. In terms of assembly, major hemoglobin is a heterotetramer of two alpha-1 chains and two beta-1 chains. In terms of tissue distribution, red blood cells.

Functionally, involved in oxygen transport from the lung to the various peripheral tissues. This Triturus cristatus (Great crested newt) protein is Hemoglobin subunit alpha-1.